We begin with the raw amino-acid sequence, 183 residues long: ATP-dependent protease subunit HslV (183 aa).

The active site involves T12. Na(+)-binding residues include A166, C169, and T172.

This sequence belongs to the peptidase T1B family. HslV subfamily. In terms of assembly, a double ring-shaped homohexamer of HslV is capped on each side by a ring-shaped HslU homohexamer. The assembly of the HslU/HslV complex is dependent on binding of ATP.

The protein resides in the cytoplasm. It carries out the reaction ATP-dependent cleavage of peptide bonds with broad specificity.. Allosterically activated by HslU binding. In terms of biological role, protease subunit of a proteasome-like degradation complex believed to be a general protein degrading machinery. The protein is ATP-dependent protease subunit HslV of Afipia carboxidovorans (strain ATCC 49405 / DSM 1227 / KCTC 32145 / OM5) (Oligotropha carboxidovorans).